Consider the following 543-residue polypeptide: Thiamine transport system permease protein ThiP (543 aa).

12 helical membrane passes run 19-39, 64-84, 102-122, 142-162, 205-225, 250-270, 300-320, 343-363, 379-399, 406-426, 468-488, and 510-530; these read VAGG…LLAL, FTIW…IPIA, LFAL…TSIY, DIYG…PLAV, GMIG…LTLG, AVAL…ILRL, IIVI…VVVS, LALG…LVAA, GASL…FILL, FVMA…PFAV, GMAF…IALF, and FDAA…MMIA. The ABC transmembrane type-1 1 domain occupies 62-266; the sequence is ARFTIWQAVA…QLALTLLILL (205 aa). Positions 339-530 constitute an ABC transmembrane type-1 2 domain; it reads IATSLALGFS…VLCLALMMIA (192 aa).

Belongs to the binding-protein-dependent transport system permease family. CysTW subfamily. The complex is composed of two ATP-binding proteins (ThiQ), two transmembrane proteins (ThiP) and a solute-binding protein (ThiB).

It is found in the cell inner membrane. Part of the ABC transporter complex ThiBPQ involved in thiamine import. Probably responsible for the translocation of the substrate across the membrane. This chain is Thiamine transport system permease protein ThiP (thiP), found in Brucella suis biovar 1 (strain 1330).